A 539-amino-acid chain; its full sequence is Probable methionine--tRNA ligase, mitochondrial (539 aa).

The short motif at 28 to 38 (FYVNAAPHLGH) is the 'HIGH' region element. The 'KMSKS' region motif lies at 326–330 (KMSKS). Lys329 serves as a coordination point for ATP.

It belongs to the class-I aminoacyl-tRNA synthetase family.

Its subcellular location is the mitochondrion matrix. It catalyses the reaction tRNA(Met) + L-methionine + ATP = L-methionyl-tRNA(Met) + AMP + diphosphate. The protein is Probable methionine--tRNA ligase, mitochondrial of Schizosaccharomyces pombe (strain 972 / ATCC 24843) (Fission yeast).